Consider the following 147-residue polypeptide: Ubiquitin-like-conjugating enzyme ATG10 (147 aa).

The Glycyl thioester intermediate role is filled by Cys116.

It belongs to the ATG10 family. Forms homooligomers. Interacts with ATG10. Interacts with ATG7 and ATG12.

The protein localises to the preautophagosomal structure membrane. In terms of biological role, E2-like enzyme required for the cytoplasm to vacuole transport (Cvt), autophagy and nucleophagy. Acts as an E2-like enzyme that catalyzes the conjugation of ATG12 to ATG5. ATG12 conjugation to ATG5 is required for proper localization of ATG8 to the preautophagosomal structure (PAS). Likely serves as an ATG5-recognition molecule. The polypeptide is Ubiquitin-like-conjugating enzyme ATG10 (Kluyveromyces marxianus (strain DMKU3-1042 / BCC 29191 / NBRC 104275) (Yeast)).